The chain runs to 351 residues: Protein Wnt-2b-A (351 aa).

The first 16 residues, Met1–Val16, serve as a signal peptide directing secretion. 11 disulfides stabilise this stretch: Cys67-Cys78, Cys118-Cys126, Cys128-Cys148, Cys197-Cys211, Cys199-Cys206, Cys269-Cys300, Cys285-Cys295, Cys299-Cys339, Cys315-Cys330, Cys317-Cys327, and Cys322-Cys323. A glycan (N-linked (GlcNAc...) asparagine) is linked at Asn77. A lipid anchor (O-palmitoleoyl serine; by PORCN) is attached at Ser203.

This sequence belongs to the Wnt family. Palmitoleoylation is required for efficient binding to frizzled receptors. Depalmitoleoylation leads to Wnt signaling pathway inhibition. Expressed maternally in both vegetal and animal blastomeres with enrichment in the animal hemisphere. Expressed zygotically near the prosencephalic-mesencephalic boundary of the developing brain in neurula and tailbud stages, and also in non-brain areas at tadpole stages.

The protein localises to the secreted. The protein resides in the extracellular space. It is found in the extracellular matrix. Functionally, ligand for members of the frizzled family of seven transmembrane receptors. Functions in the canonical Wnt/beta-catenin signaling pathway. The chain is Protein Wnt-2b-A (wnt2b-a) from Xenopus laevis (African clawed frog).